The following is a 761-amino-acid chain: MGTIKNNFQLLWLILLIVVLVNGKSINKNNNNNKNEIINVTYDGRSLIINGERKLLFSGSIHYPRTSEEMWPIILKQSKDAGIDIIDTYIFWNIHQPNSPSEYYFDGNANITKFLDLCKEFDLYVNLRIGPYVCAEWTYGGFPIWLKEIPNIVYRDYNQQWMNEMSIWMEFVVKYLDNYFAPNGGPIILAQVENEYGWLEQEYGINGTEYAKWSIDFAKSLNIGIPWIMCQQNDIESAINTCNGYYCHDWISSHWEQFPNQPSFWTENWIGWFENWGQAKPKRPVQDILYSNARFIAYGGSLINYYMWFGGTNFGRTSGGPWIITSYDYDAPLDEFGQPNEPKFSLSSKFHQVLHAIESDLLNNQPPKSPTFLSQFIEVHQYGINLSFITNYGTSTTPKIIQWMNQTYTIQPWSVLIIYNNEILFDTSFIPPNTLFNNNTINNFKPINQNIIQSIFQISDFNLNSGGGGGDGDGNSVNSVSPIEQLLITKDTSDYCWYSTNVTTTSLSYNEKGNIFLTITEFYDYVHIFIDNEYQGSAFSPSLCQLQLNPINNSTTFQLQILSMTIGLENYASHMENYTRGILGSILIGSQNLTNNQWLMKSGLIGENIKIFNNDNTINWQTSPSSSSSSLIQKPLTWYKLNISLVGLPIDISSTVYALDMSSMNKGMIWVNGYSIGRYWLIEATQSICNQSAIENYSYIGEYDPSNYRIDCNKPSQSIYSVPIDWLFNNNYNNQYATIIIIEELNGNPNEIQLLSNKIIN.

The signal sequence occupies residues 1–23 (MGTIKNNFQLLWLILLIVVLVNG). 2 N-linked (GlcNAc...) asparagine glycosylation sites follow: Asn-39 and Asn-110. Catalysis depends on Glu-195, which acts as the Proton donor. N-linked (GlcNAc...) asparagine glycosylation occurs at Asn-206. Catalysis depends on Glu-267, which acts as the Nucleophile. 11 N-linked (GlcNAc...) asparagine glycosylation sites follow: Asn-385, Asn-405, Asn-438, Asn-501, Asn-552, Asn-553, Asn-577, Asn-592, Asn-642, Asn-690, and Asn-696.

Belongs to the glycosyl hydrolase 35 family.

It carries out the reaction Hydrolysis of terminal non-reducing beta-D-galactose residues in beta-D-galactosides.. Its function is as follows. Cleaves beta-linked terminal galactosyl residues from gangliosides, glycoproteins, and glycosaminoglycans. The polypeptide is Probable beta-galactosidase 2 (glb2) (Dictyostelium discoideum (Social amoeba)).